The primary structure comprises 102 residues: Large ribosomal subunit protein uL24 (102 aa).

The protein belongs to the universal ribosomal protein uL24 family. In terms of assembly, part of the 50S ribosomal subunit.

Its function is as follows. One of two assembly initiator proteins, it binds directly to the 5'-end of the 23S rRNA, where it nucleates assembly of the 50S subunit. Functionally, one of the proteins that surrounds the polypeptide exit tunnel on the outside of the subunit. This Agrobacterium fabrum (strain C58 / ATCC 33970) (Agrobacterium tumefaciens (strain C58)) protein is Large ribosomal subunit protein uL24.